Consider the following 384-residue polypeptide: N-acetyldiaminopimelate deacetylase (384 aa).

Residue D74 is part of the active site. The active-site Proton acceptor is E133.

It belongs to the peptidase M20A family. N-acetyldiaminopimelate deacetylase subfamily.

The enzyme catalyses N-acetyl-(2S,6S)-2,6-diaminopimelate + H2O = (2S,6S)-2,6-diaminopimelate + acetate. Its pathway is amino-acid biosynthesis; L-lysine biosynthesis via DAP pathway; LL-2,6-diaminopimelate from (S)-tetrahydrodipicolinate (acetylase route): step 3/3. Catalyzes the conversion of N-acetyl-diaminopimelate to diaminopimelate and acetate. This chain is N-acetyldiaminopimelate deacetylase, found in Leuconostoc mesenteroides subsp. mesenteroides (strain ATCC 8293 / DSM 20343 / BCRC 11652 / CCM 1803 / JCM 6124 / NCDO 523 / NBRC 100496 / NCIMB 8023 / NCTC 12954 / NRRL B-1118 / 37Y).